Consider the following 202-residue polypeptide: Endothelin-1 (202 aa).

The first 25 residues, 1–25 (MDYFPVIFSLLFVAFQGAPETAVLG), serve as a signal peptide directing secretion. A propeptide spanning residues 26 to 50 (AELSPRAEKEVQSPPPSTSWRPRRS) is cleaved from the precursor. The disordered stretch occupies residues 28–47 (LSPRAEKEVQSPPPSTSWRP). 2 disulfide bridges follow: C53–C67 and C55–C63. Residues 74–202 (VNTPERVVPY…DQKLIHNRAH (129 aa)) constitute a propeptide that is removed on maturation. An endothelin-like region spans residues 110–124 (CQCAHQKDKKCWNFC).

The protein belongs to the endothelin/sarafotoxin family.

The protein localises to the secreted. In terms of biological role, endothelins are endothelium-derived vasoconstrictor peptides. Probable ligand for G-protein coupled receptors EDNRA and EDNRB which activates PTK2B, BCAR1, BCAR3 and, GTPases RAP1 and RHOA cascade in glomerular mesangial cells. Also binds the DEAR/FBXW7-AS1 receptor. Promotes mesenteric arterial wall remodeling via activation of ROCK signaling and subsequent colocalization of NFATC3 with F-actin filaments. NFATC3 then translocates to the nucleus where it subsequently promotes the transcription of the smooth muscle hypertrophy and differentiation marker ACTA2. The protein is Endothelin-1 (Edn1) of Rattus norvegicus (Rat).